Consider the following 303-residue polypeptide: MRVVVQGPGSLGSLVGGVLAGGETAVTLLGHQSEHLTRVREDGLRVVQPDGTTRVTRPSVATDPSVVADADLVVVCVKSYDTASAARALGRQCDGAMVLTLQNGLGNAAVLAEHVPADTVLVGTTTHGAARTEPGVVRHAGGGETTIGRYRGANDARVASVAAAFSTGGMETTVTASPQRAVWEKVLVNVGINAATALADVDNGALVECPPGERVLERAVTEGVRVAEAEGVSVSESVVERARQVAARTASNESSMRQDLAGGARTEVESLHGAVVERARDHDIAVPVIRTLADLVRLAQRDG.

NADP(+) contacts are provided by residues 7 to 12 (GPGSLG), lysine 78, asparagine 103, and alanine 129. Lysine 185 (proton donor) is an active-site residue. Residues lysine 185, asparagine 189, asparagine 193, asparagine 203, and 252-255 (NESS) each bind substrate. Residue glutamate 267 coordinates NADP(+).

It belongs to the ketopantoate reductase family.

The protein localises to the cytoplasm. The enzyme catalyses (R)-pantoate + NAD(+) = 2-dehydropantoate + NADH + H(+). The catalysed reaction is (R)-pantoate + NADP(+) = 2-dehydropantoate + NADPH + H(+). Its pathway is cofactor biosynthesis; coenzyme A biosynthesis. Functionally, catalyzes the NAD(P)H-dependent reduction of ketopantoate into pantoic acid. The sequence is that of 2-dehydropantoate 2-reductase from Halobacterium salinarum (strain ATCC 700922 / JCM 11081 / NRC-1) (Halobacterium halobium).